A 658-amino-acid chain; its full sequence is Squalene--hopene cyclase (658 aa).

Residues 69–110 form a PFTB 1 repeat; that stretch reads EAKIGRYLRRIQGEHGGWSLFYGGDLDLSATVKAYFALKMIG. Asp-392 acts as the Proton donor in catalysis. 3 PFTB repeats span residues 418–459, 486–526, and 534–584; these read KARA…GALL, MKAA…NVAA, and IQKA…GLMA.

Belongs to the terpene cyclase/mutase family.

The protein localises to the cell membrane. It catalyses the reaction squalene = hop-22(29)-ene. The catalysed reaction is squalene + H2O = hopan-22-ol. Its pathway is secondary metabolite biosynthesis; hopanoid biosynthesis. In terms of biological role, catalyzes the cyclization of squalene into hopene. This is Squalene--hopene cyclase (shc) from Zymomonas mobilis subsp. mobilis (strain ATCC 31821 / ZM4 / CP4).